Consider the following 355-residue polypeptide: Tetraacyldisaccharide 4'-kinase (355 aa).

ATP is bound at residue 49 to 56 (TAGGTGKT).

The protein belongs to the LpxK family.

It carries out the reaction a lipid A disaccharide + ATP = a lipid IVA + ADP + H(+). Its pathway is glycolipid biosynthesis; lipid IV(A) biosynthesis; lipid IV(A) from (3R)-3-hydroxytetradecanoyl-[acyl-carrier-protein] and UDP-N-acetyl-alpha-D-glucosamine: step 6/6. Its function is as follows. Transfers the gamma-phosphate of ATP to the 4'-position of a tetraacyldisaccharide 1-phosphate intermediate (termed DS-1-P) to form tetraacyldisaccharide 1,4'-bis-phosphate (lipid IVA). The polypeptide is Tetraacyldisaccharide 4'-kinase (Chlorobium luteolum (strain DSM 273 / BCRC 81028 / 2530) (Pelodictyon luteolum)).